We begin with the raw amino-acid sequence, 166 residues long: Ribosome maturation factor RimP (166 aa).

The protein belongs to the RimP family.

Its subcellular location is the cytoplasm. Functionally, required for maturation of 30S ribosomal subunits. The chain is Ribosome maturation factor RimP from Paramagnetospirillum magneticum (strain ATCC 700264 / AMB-1) (Magnetospirillum magneticum).